The sequence spans 299 residues: Acetylglutamate kinase (299 aa).

Substrate-binding positions include 72–73 (GG), Arg94, and Asn196.

The protein belongs to the acetylglutamate kinase family. ArgB subfamily.

Its subcellular location is the cytoplasm. It catalyses the reaction N-acetyl-L-glutamate + ATP = N-acetyl-L-glutamyl 5-phosphate + ADP. The protein operates within amino-acid biosynthesis; L-arginine biosynthesis; N(2)-acetyl-L-ornithine from L-glutamate: step 2/4. Its function is as follows. Catalyzes the ATP-dependent phosphorylation of N-acetyl-L-glutamate. In Burkholderia cenocepacia (strain HI2424), this protein is Acetylglutamate kinase.